A 511-amino-acid polypeptide reads, in one-letter code: Maturase K (511 aa).

This sequence belongs to the intron maturase 2 family. MatK subfamily.

The protein localises to the plastid. Its subcellular location is the chloroplast. Its function is as follows. Usually encoded in the trnK tRNA gene intron. Probably assists in splicing its own and other chloroplast group II introns. The sequence is that of Maturase K from Hordeum jubatum (Foxtail barley).